Reading from the N-terminus, the 435-residue chain is Diguanylate cyclase TpbB (435 aa).

Over 1 to 22 the chain is Cytoplasmic; it reads MNRRRRYTGSNPSLRRVLYRAH. The chain crosses the membrane as a helical span at residues 23-43; the sequence is LGVALVAVFTAGLAVTLVGLL. Topologically, residues 44–154 are periplasmic; that stretch reads TLRAYADPNQ…VKGSGGSLLR (111 aa). The helical transmembrane segment at 155–175 threads the bilayer; the sequence is FLLTGFAGMVLCLLLTALGAF. Residues 176-435 are Cytoplasmic-facing; sequence YLSRRLVRGI…DSATPEAPPK (260 aa). The 54-residue stretch at 183–236 folds into the HAMP domain; the sequence is RGIVGPLDQLAKVAHTVRRERDFEKRVPEAGIAELSQLGEDFNALLDELESWQA. The GGDEF domain maps to 279 to 415; it reads EQLAVLFIDS…GSRRLAELND (137 aa). Mg(2+) is bound by residues S288 and D330. D330 functions as the Proton acceptor in the catalytic mechanism. Residues 414-426 show a composition bias toward basic and acidic residues; the sequence is NDPRILQEEKEID. A disordered region spans residues 414 to 435; the sequence is NDPRILQEEKEIDSATPEAPPK.

The cofactor is Mg(2+). Post-translationally, phosphorylated at both Tyr residues and Ser/Thr residues. Dephosphorylated and inactivated by TpbA.

It localises to the cell inner membrane. It carries out the reaction 2 GTP = 3',3'-c-di-GMP + 2 diphosphate. The protein operates within purine metabolism; 3',5'-cyclic di-GMP biosynthesis. Its activity is regulated as follows. Activity is tightly controlled by YfiR, a small periplasmic protein, and the OmpA/Pal-like outer-membrane lipoprotein YfiB. Diguanylate cyclase activity is inhibited by the specific interaction of YfiR with the TpbB periplasmic domain and is activated by YfiB, which releases the YfiR-mediated repression through sequestration of YfiR to the outer membrane. Activity is also controlled by dephosphorylation of the periplasmic domain by the tyrosine phosphatase TpbA. Catalyzes the synthesis of cyclic-di-GMP (c-di-GMP) via the condensation of 2 GTP molecules. Important for the regulation of biofilm maintenance when exposed to peroxide. In terms of biological role, part of the YfiB-TpbB-YfiR (or yfiBNR) system, encoding a tripartite signaling module that modulates intracellular c-di-GMP levels. The system is a key regulator of the small colony variant (SCV) phenotype, and plays an important role in biofilm formation and in vivo persistence. The c-di-GMP produced by TpbB/YfiN stimulates the production of the Pel and Psl exopolysaccharides, which promotes surface attachment, generates an SCV phenotype and confers resistance against phagocytosis. This chain is Diguanylate cyclase TpbB, found in Pseudomonas aeruginosa (strain UCBPP-PA14).